Consider the following 1342-residue polypeptide: DNA-directed RNA polymerase subunit beta (1342 aa).

Lys-1022 and Lys-1200 each carry N6-acetyllysine.

It belongs to the RNA polymerase beta chain family. As to quaternary structure, the RNAP catalytic core consists of 2 alpha, 1 beta, 1 beta' and 1 omega subunit. When a sigma factor is associated with the core the holoenzyme is formed, which can initiate transcription.

It carries out the reaction RNA(n) + a ribonucleoside 5'-triphosphate = RNA(n+1) + diphosphate. DNA-dependent RNA polymerase catalyzes the transcription of DNA into RNA using the four ribonucleoside triphosphates as substrates. In Escherichia coli O6:K15:H31 (strain 536 / UPEC), this protein is DNA-directed RNA polymerase subunit beta.